The following is a 377-amino-acid chain: Cyclin-I (377 aa).

The disordered stretch occupies residues 357–377 (DLSRQEGHASPCPPLQPVSVM). Positions 367–377 (PCPPLQPVSVM) are enriched in pro residues.

This sequence belongs to the cyclin family. In terms of tissue distribution, highest levels in adult heart, brain and skeletal muscle. Lower levels in adult placenta, lung, kidney and pancreas. Also high levels in fetal brain and lower levels in fetal lung, liver and kidney. Also abundant in testis and thyroid.

It localises to the nucleus membrane. In Homo sapiens (Human), this protein is Cyclin-I.